We begin with the raw amino-acid sequence, 428 residues long: Serine--tRNA ligase (428 aa).

Thr-235–Glu-237 is a binding site for L-serine. Arg-266 to Glu-268 serves as a coordination point for ATP. Residue Glu-289 coordinates L-serine. Residue Glu-353–Ser-356 coordinates ATP. Ser-389 is a binding site for L-serine.

Belongs to the class-II aminoacyl-tRNA synthetase family. Type-1 seryl-tRNA synthetase subfamily. In terms of assembly, homodimer. The tRNA molecule binds across the dimer.

It is found in the cytoplasm. The catalysed reaction is tRNA(Ser) + L-serine + ATP = L-seryl-tRNA(Ser) + AMP + diphosphate + H(+). It carries out the reaction tRNA(Sec) + L-serine + ATP = L-seryl-tRNA(Sec) + AMP + diphosphate + H(+). It participates in aminoacyl-tRNA biosynthesis; selenocysteinyl-tRNA(Sec) biosynthesis; L-seryl-tRNA(Sec) from L-serine and tRNA(Sec): step 1/1. Catalyzes the attachment of serine to tRNA(Ser). Is also able to aminoacylate tRNA(Sec) with serine, to form the misacylated tRNA L-seryl-tRNA(Sec), which will be further converted into selenocysteinyl-tRNA(Sec). The polypeptide is Serine--tRNA ligase (Shewanella denitrificans (strain OS217 / ATCC BAA-1090 / DSM 15013)).